A 249-amino-acid polypeptide reads, in one-letter code: Sesquipedalian-1 (249 aa).

One can recognise a PH domain in the interval 17-113 (PVDNAGFLYK…WVKALSRASF (97 aa)). Disordered stretches follow at residues 134 to 159 (GGMA…LAPV) and 194 to 219 (EATF…HGPL). Pro residues predominate over residues 140 to 152 (QPQPQSLPLPPSL). Residue Ser-213 is modified to Phosphoserine. The short motif at 223 to 235 (PFARLHECYGQEI) is the F&amp;H element.

This sequence belongs to the sesquipedalian family. In terms of assembly, forms homodimers and heterodimers with PHETA2. Interacts with OCRL and INPP5B. Interaction with OCRL may be important for endosomal morphology and function.

The protein localises to the early endosome. The protein resides in the recycling endosome. It localises to the golgi apparatus. It is found in the trans-Golgi network. Its subcellular location is the cytoplasmic vesicle. The protein localises to the clathrin-coated vesicle. Its function is as follows. Plays a role in endocytic trafficking. Required for receptor recycling from endosomes, both to the trans-Golgi network and the plasma membrane. The chain is Sesquipedalian-1 from Homo sapiens (Human).